Consider the following 273-residue polypeptide: DnaJ homolog subfamily C member 27-A (273 aa).

GTP-binding positions include Gly23–Ser30, Asp71–His75, and Asn134–Asp137. Residues Asp217 to Lys273 enclose the J domain.

This sequence belongs to the small GTPase superfamily. Rab family.

The protein resides in the nucleus. In terms of biological role, GTPase possibly involved in regulation of the MEK/ERK pathway. This chain is DnaJ homolog subfamily C member 27-A (dnajc27-a), found in Xenopus laevis (African clawed frog).